Here is an 84-residue protein sequence, read N- to C-terminus: Cell division topological specificity factor (84 aa).

This sequence belongs to the MinE family.

Functionally, prevents the cell division inhibition by proteins MinC and MinD at internal division sites while permitting inhibition at polar sites. This ensures cell division at the proper site by restricting the formation of a division septum at the midpoint of the long axis of the cell. This is Cell division topological specificity factor from Pseudomonas fluorescens (strain SBW25).